A 507-amino-acid polypeptide reads, in one-letter code: FAD-linked oxidoreductase OXR1 (507 aa).

Positions M1–G21 are cleaved as a signal peptide. 2 N-linked (GlcNAc...) asparagine glycosylation sites follow: N34 and N65. The FAD-binding PCMH-type domain occupies Y73–L245. Residues N263 and N288 are each glycosylated (N-linked (GlcNAc...) asparagine).

This sequence belongs to the oxygen-dependent FAD-linked oxidoreductase family. FAD is required as a cofactor.

It carries out the reaction dihydropyriculol + A = pyriculol + AH2. The enzyme catalyses dihydropyriculariol + A = pyriculariol + AH2. Its pathway is polyketide biosynthesis. Its function is as follows. FAD-linked oxidoreductase; part of the gene cluster that mediates the biosynthesis of pyriculol and pyriculariol, two heptaketides that induce lesion formation upon application on rice leaves but are dispensable for pathogenicity. The highly reducing polyketide synthase synthesizes the heptaketide backbone of pyriculol and pyriculariol. Pyriculol and pyriculariol contain several hydroxyl moieties and double bonds, so it can be assumed that several reduction steps occur during biosynthesis. These reactions could be executed by PKS19 itself or partly by the tailoring enzymes OXR1, OXR2, RED1, RED2 or RED3, identified within the cluster. The FAD-linked oxidoreductase OXR1 is the only tailoring enzyme for which the function has been determined yet, and is involved in the oxidation of dihydropyriculol and dihydropyriculariol into pyriculol and pyriculariol, respectively. This Pyricularia oryzae (strain 70-15 / ATCC MYA-4617 / FGSC 8958) (Rice blast fungus) protein is FAD-linked oxidoreductase OXR1.